A 517-amino-acid polypeptide reads, in one-letter code: GMP synthase [glutamine-hydrolyzing] (517 aa).

One can recognise a Glutamine amidotransferase type-1 domain in the interval 9–199; sequence RILILDFGSQ…VLGVCGCERL (191 aa). C86 functions as the Nucleophile in the catalytic mechanism. Catalysis depends on residues H173 and E175. Residues 200–392 enclose the GMPS ATP-PPase domain; sequence WTSESIIEDA…LGLPYEMLYR (193 aa). 227-233 contacts ATP; sequence SGGVDSS.

As to quaternary structure, homodimer.

It catalyses the reaction XMP + L-glutamine + ATP + H2O = GMP + L-glutamate + AMP + diphosphate + 2 H(+). It participates in purine metabolism; GMP biosynthesis; GMP from XMP (L-Gln route): step 1/1. Its function is as follows. Catalyzes the synthesis of GMP from XMP. The chain is GMP synthase [glutamine-hydrolyzing] from Vibrio vulnificus (strain YJ016).